The following is a 728-amino-acid chain: Bacteriophytochrome (728 aa).

Position 12 (cysteine 12) interacts with a tetrapyrrole. Positions 17–495 (IHVPGAIQPH…RLDLMELCLN (479 aa)) are chromophore binding domain. The region spanning 139 to 303 (DTASLLSNVT…IFSQVCSAIV (165 aa)) is the GAF domain. A Histidine kinase domain is found at 510–721 (VLGHDLRNPL…TFCLRLPVRQ (212 aa)). Histidine 513 carries the phosphohistidine; by autocatalysis modification.

It in the N-terminal section; belongs to the phytochrome family. In terms of processing, contains one covalently linked tetrapyrrole chromophore.

The catalysed reaction is ATP + protein L-histidine = ADP + protein N-phospho-L-histidine.. Photoreceptor which exists in two forms that are reversibly interconvertible by light: the R form that absorbs maximally in the red region of the spectrum and the FR form that absorbs maximally in the far-red region. The polypeptide is Bacteriophytochrome (bphP) (Pseudomonas aeruginosa (strain ATCC 15692 / DSM 22644 / CIP 104116 / JCM 14847 / LMG 12228 / 1C / PRS 101 / PAO1)).